Reading from the N-terminus, the 128-residue chain is uncharacterized protein (128 aa).

The HTH hxlR-type domain occupies 18-116; the sequence is CPVETTLDII…WGEKYKDRID (99 aa).

This is an uncharacterized protein from Bacillus subtilis (strain 168).